The chain runs to 172 residues: Large ribosomal subunit protein uL10 (172 aa).

Belongs to the universal ribosomal protein uL10 family. Part of the ribosomal stalk of the 50S ribosomal subunit. The N-terminus interacts with L11 and the large rRNA to form the base of the stalk. The C-terminus forms an elongated spine to which L12 dimers bind in a sequential fashion forming a multimeric L10(L12)X complex.

Its function is as follows. Forms part of the ribosomal stalk, playing a central role in the interaction of the ribosome with GTP-bound translation factors. In Caulobacter sp. (strain K31), this protein is Large ribosomal subunit protein uL10.